We begin with the raw amino-acid sequence, 124 residues long: Large ribosomal subunit protein bL17 (124 aa).

This sequence belongs to the bacterial ribosomal protein bL17 family. In terms of assembly, part of the 50S ribosomal subunit. Contacts protein L32.

The protein is Large ribosomal subunit protein bL17 of Trichlorobacter lovleyi (strain ATCC BAA-1151 / DSM 17278 / SZ) (Geobacter lovleyi).